Here is a 574-residue protein sequence, read N- to C-terminus: Pescadillo homolog (574 aa).

The segment at P289–E312 is disordered. Residues P292 to A303 are compositionally biased toward acidic residues. The BRCT domain maps to K323–P416. The interval L452–N486 is disordered. Residues G453–E477 are compositionally biased toward acidic residues.

This sequence belongs to the pescadillo family. In terms of assembly, component of the PeBoW complex, composed of bop1, pes1 and wdr12. The complex is held together by bop1, which interacts with pes1 via its N-terminal domain and with wdr12 via a high-affinity interaction between the seven-bladed beta-propeller domains of the 2 proteins. The PeBoW complex associates with the 66S pre-ribosome.

It localises to the nucleus. It is found in the nucleolus. The protein resides in the nucleoplasm. Component of the PeBoW complex, which is required for maturation of 28S and 5.8S ribosomal RNAs and formation of the 60S ribosome. Required for neural crest migration and eye development. The polypeptide is Pescadillo homolog (pes1) (Xenopus laevis (African clawed frog)).